Reading from the N-terminus, the 113-residue chain is Large ribosomal subunit protein eL31B (113 aa).

This sequence belongs to the eukaryotic ribosomal protein eL31 family. Component of the large ribosomal subunit (LSU). Mature yeast ribosomes consist of a small (40S) and a large (60S) subunit. The 40S small subunit contains 1 molecule of ribosomal RNA (18S rRNA) and 33 different proteins (encoded by 57 genes). The large 60S subunit contains 3 rRNA molecules (25S, 5.8S and 5S rRNA) and 46 different proteins (encoded by 81 genes).

The protein resides in the cytoplasm. Component of the ribosome, a large ribonucleoprotein complex responsible for the synthesis of proteins in the cell. The small ribosomal subunit (SSU) binds messenger RNAs (mRNAs) and translates the encoded message by selecting cognate aminoacyl-transfer RNA (tRNA) molecules. The large subunit (LSU) contains the ribosomal catalytic site termed the peptidyl transferase center (PTC), which catalyzes the formation of peptide bonds, thereby polymerizing the amino acids delivered by tRNAs into a polypeptide chain. The nascent polypeptides leave the ribosome through a tunnel in the LSU and interact with protein factors that function in enzymatic processing, targeting, and the membrane insertion of nascent chains at the exit of the ribosomal tunnel. This chain is Large ribosomal subunit protein eL31B, found in Saccharomyces cerevisiae (strain ATCC 204508 / S288c) (Baker's yeast).